The chain runs to 1508 residues: Ras guanine nucleotide exchange factor Y (1508 aa).

8 disordered regions span residues 1–73, 128–182, 197–272, 396–517, 565–593, 606–727, 831–1021, and 1153–1172; these read MIII…NNNE, KVLS…PKSV, IDNN…YSTS, ILQC…EDED, LSEN…SIPT, LPNI…AEPS, NVII…SNKE, and TNED…TNKN. Low complexity-rich tracts occupy residues 9-22 and 33-72; these read NINN…NNNS and NNNN…NNNN. Composition is skewed to polar residues over residues 128-150 and 172-182; these read KVLS…TNTI and DRTSQDIPKSV. Low complexity predominate over residues 199-216; it reads NNTTNNNSNNNNNSSLST. A compositionally biased stretch (basic and acidic residues) spans 223-232; that stretch reads DSLETNPIKD. Residues 233 to 250 show a composition bias toward acidic residues; that stretch reads EESEESEESEESKEEEEE. Residues 255–272 show a composition bias toward low complexity; sequence IKTTKTTSETIESSYSTS. Residues 399 to 409 are compositionally biased toward basic and acidic residues; it reads CKDDSSSKDQD. The span at 413–447 shows a compositional bias: low complexity; the sequence is NNSAGSSGNSSASNSNRNSIAFSSSNHFSSESSQS. Residues 465–475 show a composition bias toward pro residues; sequence PQSPSPSPSPP. Over residues 492-510 the composition is skewed to polar residues; the sequence is FNQQTNFSVSPTKSPSNEK. Composition is skewed to low complexity over residues 574 to 593, 606 to 660, 668 to 687, 831 to 855, 862 to 891, 942 to 984, 993 to 1019, and 1160 to 1172; these read NQPS…SIPT, LPNI…LTES, NNNN…NNNN, NVII…NTVK, NKSS…SLTP, SLWS…SPPT, ITTG…NNSN, and SNSN…TNKN. A coiled-coil region spans residues 659–686; that stretch reads ESLKTRIEENNNNNNNKNINNNNNNNNN. An N-terminal Ras-GEF domain is found at 1074 to 1234; that stretch reads NRIKVRSASL…IILKIIDRKA (161 aa). The 231-residue stretch at 1278–1508 folds into the Ras-GEF domain; the sequence is DDLEIARQLT…LYKQSKIIEP (231 aa).

In terms of biological role, promotes the exchange of Ras-bound GDP by GTP. This Dictyostelium discoideum (Social amoeba) protein is Ras guanine nucleotide exchange factor Y (gefY).